Reading from the N-terminus, the 400-residue chain is Nicotinate phosphoribosyltransferase (400 aa).

His-220 carries the post-translational modification Phosphohistidine; by autocatalysis.

This sequence belongs to the NAPRTase family. Post-translationally, transiently phosphorylated on a His residue during the reaction cycle. Phosphorylation strongly increases the affinity for substrates and increases the rate of nicotinate D-ribonucleotide production. Dephosphorylation regenerates the low-affinity form of the enzyme, leading to product release.

It carries out the reaction nicotinate + 5-phospho-alpha-D-ribose 1-diphosphate + ATP + H2O = nicotinate beta-D-ribonucleotide + ADP + phosphate + diphosphate. It functions in the pathway cofactor biosynthesis; NAD(+) biosynthesis; nicotinate D-ribonucleotide from nicotinate: step 1/1. Functionally, catalyzes the synthesis of beta-nicotinate D-ribonucleotide from nicotinate and 5-phospho-D-ribose 1-phosphate at the expense of ATP. This Shigella dysenteriae serotype 1 (strain Sd197) protein is Nicotinate phosphoribosyltransferase.